A 105-amino-acid chain; its full sequence is Small ribosomal subunit protein uS10 (105 aa).

This sequence belongs to the universal ribosomal protein uS10 family. As to quaternary structure, part of the 30S ribosomal subunit.

Functionally, involved in the binding of tRNA to the ribosomes. The protein is Small ribosomal subunit protein uS10 of Trichormus variabilis (strain ATCC 29413 / PCC 7937) (Anabaena variabilis).